A 206-amino-acid polypeptide reads, in one-letter code: MLAEKLSQDLAKAGLQVDAQQQQQLLAFVALLDKWNKAYNLTSVREPAQMLTRHILDSLVVSPHLVGSRFIDVGTGPGLPGIPLAIINPDKEFVLLDSLGKRIRFQKQVAVELGLKNISSVESRVELYQPEQGFDGVLSRAFASVGDMLSWCHHLPAENGSFYALKGQLGDEEMAGIPEGFKLIETIRLTVPGLDEQRHLLKLVKA.

S-adenosyl-L-methionine-binding positions include glycine 74, leucine 79, 125-126, and arginine 140; that span reads VE.

Belongs to the methyltransferase superfamily. RNA methyltransferase RsmG family.

It localises to the cytoplasm. It catalyses the reaction guanosine(527) in 16S rRNA + S-adenosyl-L-methionine = N(7)-methylguanosine(527) in 16S rRNA + S-adenosyl-L-homocysteine. Functionally, specifically methylates the N7 position of guanine in position 527 of 16S rRNA. The sequence is that of Ribosomal RNA small subunit methyltransferase G from Shewanella amazonensis (strain ATCC BAA-1098 / SB2B).